The chain runs to 239 residues: tRNA (guanine-N(7)-)-methyltransferase (239 aa).

E69, E94, D121, and D144 together coordinate S-adenosyl-L-methionine. D144 is an active-site residue. A substrate-binding site is contributed by K148. The tract at residues 150 to 155 (RHNKRR) is interaction with RNA. Substrate-binding positions include D180 and 217–220 (TKFE).

It belongs to the class I-like SAM-binding methyltransferase superfamily. TrmB family. As to quaternary structure, monomer.

It catalyses the reaction guanosine(46) in tRNA + S-adenosyl-L-methionine = N(7)-methylguanosine(46) in tRNA + S-adenosyl-L-homocysteine. The protein operates within tRNA modification; N(7)-methylguanine-tRNA biosynthesis. Catalyzes the formation of N(7)-methylguanine at position 46 (m7G46) in tRNA. This chain is tRNA (guanine-N(7)-)-methyltransferase, found in Escherichia coli O6:K15:H31 (strain 536 / UPEC).